A 751-amino-acid chain; its full sequence is Conserved oligomeric Golgi complex subunit 5 (751 aa).

Disordered stretches follow at residues 1 to 21 (MVTGDPVATKTPNAADSDDND) and 244 to 263 (SPTHNVSKPAPSRGPGKTPQ).

The protein belongs to the COG5 family. As to quaternary structure, component of the conserved oligomeric Golgi complex which is composed of eight different subunits and is required for normal Golgi morphology and localization.

It is found in the golgi apparatus membrane. Required for normal Golgi function and necessary during spermatogenesis. Required for cleavage furrow ingression during cytokinesis in dividing spermatocytes and for the extensive polarized cell growth that accompanies spermatid elongation. This Drosophila melanogaster (Fruit fly) protein is Conserved oligomeric Golgi complex subunit 5 (fws).